The following is a 459-amino-acid chain: Probable rhamnogalacturonase C (459 aa).

The first 18 residues, 1–18 (MRASILPLTLFLATLAGA), serve as a signal peptide directing secretion. Residues N36, N64, N77, N140, and N155 are each glycosylated (N-linked (GlcNAc...) asparagine). C39 and C65 are oxidised to a cystine. Catalysis depends on D216, which acts as the Proton donor. An intrachain disulfide couples C218 to C235. Residues N236 and N251 are each glycosylated (N-linked (GlcNAc...) asparagine). Residue H290 is part of the active site. N315 carries an N-linked (GlcNAc...) asparagine glycan. Residues C337 and C343 are joined by a disulfide bond. N-linked (GlcNAc...) asparagine glycosylation occurs at N356. The cysteines at positions 365 and 374 are disulfide-linked.

Belongs to the glycosyl hydrolase 28 family.

It localises to the secreted. Its function is as follows. Pectinolytic enzymes consist of four classes of enzymes: pectine lyase, polygalacturonase, pectin methylesterase and rhamnogalacturonase. Hydrolyzes alpha-D-galacturonopyranosyl-(1,2)-alpha-L-rhamnopyranosyl linkages in the backbone of the hairy regions of pectins. The protein is Probable rhamnogalacturonase C (rhgC) of Aspergillus niger (strain ATCC MYA-4892 / CBS 513.88 / FGSC A1513).